The following is an 889-amino-acid chain: Voltage-gated potassium channel KCNC3 (889 aa).

Residues 1-80 (MLSSVCVWSF…CSGLPAVAMG (80 aa)) form an important for normal N-type inactivation region. Residues 1-291 (MLSSVCVWSF…EDPYSSRAAR (291 aa)) lie on the Cytoplasmic side of the membrane. A disordered region spans residues 10-66 (FSGRQGTRKQHSQPAPTPQPPESSPPPLLPPPQQQCAQPGTAASPAGAPLSCGPGGR). Over residues 24-42 (APTPQPPESSPPPLLPPPQ) the composition is skewed to pro residues. Residues histidine 159, cysteine 165, cysteine 186, and cysteine 187 each contribute to the Zn(2+) site. Residues 202–231 (DSFEAPDSSGNANANAGGAHDAGLDDEAGA) form a disordered region. Low complexity predominate over residues 211 to 222 (GNANANAGGAHD). The chain crosses the membrane as a helical span at residues 292–310 (YVAFASLFFILISITTFCL). The N-linked (GlcNAc...) asparagine glycan is linked to asparagine 321. Residues 352–371 (VEGVCVVWFTFEFLMRVTFC) form a helical membrane-spanning segment. At 372-380 (PDKVEFLKS) the chain is on the cytoplasmic side. Residues 381 to 399 (SLNIIDCVAILPFYLEVGL) traverse the membrane as a helical segment. A helical; Voltage-sensor membrane pass occupies residues 413–435 (FLRVVRFVRILRIFKLTRHFVGL). Over 436–448 (RVLGHTLRASTNE) the chain is Cytoplasmic. The helical transmembrane segment at 449–470 (FLLLIIFLALGVLIFATMIYYA) threads the bilayer. The K(+) site is built by threonine 504, leucine 505, glycine 506, and tyrosine 507. The short motif at 504–509 (TLGYGD) is the Selectivity filter element. Residues 519–540 (LVGALCALAGVLTIAMPVPVIV) form a helical membrane-spanning segment. The Cytoplasmic segment spans residues 541 to 889 (NNFGMYYSLA…FPSRHSSPAV (349 aa)). Disordered regions lie at residues 557–627 (PKKK…LLRG), 691–834 (IDQP…PQSL), and 852–889 (TLGF…SPAV). An Omega-N-methylarginine modification is found at arginine 626. Serine 697 and serine 702 each carry phosphoserine. The span at 748–764 (SQAPPASCPTSTPTQQP) shows a compositional bias: low complexity. At threonine 759 the chain carries Phosphothreonine. Over residues 794–808 (HRSHQPPGKHQRGGR) the composition is skewed to basic residues.

This sequence belongs to the potassium channel family. C (Shaw) (TC 1.A.1.2) subfamily. Kv3.3/KCNC3 sub-subfamily. In terms of assembly, homotetramer. Heterotetramer with KCNC1. Interacts (via C-terminus) with HAX1; this interaction modulates channel gating. Identified in a complex with ACTR3, a subunit of the Arp2/3 complex; this interaction is indirect and depends on the presence of HAX1. In terms of processing, N-glycosylated. Detected on Purkinje cells in the cerebellum molecular layer (at protein level).

It localises to the cell membrane. The protein resides in the presynaptic cell membrane. The protein localises to the perikaryon. Its subcellular location is the cell projection. It is found in the axon. It localises to the dendrite. The protein resides in the dendritic spine membrane. The protein localises to the cytoplasm. Its subcellular location is the cell cortex. It is found in the cytoskeleton. It carries out the reaction K(+)(in) = K(+)(out). Functionally, voltage-gated potassium channel that plays an important role in the rapid repolarization of fast-firing brain neurons. The channel opens in response to the voltage difference across the membrane, forming a potassium-selective channel through which potassium ions pass in accordance with their electrochemical gradient. The channel displays rapid activation and inactivation kinetics. It plays a role in the regulation of the frequency, shape and duration of action potentials in Purkinje cells. Required for normal survival of cerebellar neurons, probably via its role in regulating the duration and frequency of action potentials that in turn regulate the activity of voltage-gated Ca(2+) channels and cellular Ca(2+) homeostasis. Required for normal motor function. Plays a role in the reorganization of the cortical actin cytoskeleton and the formation of actin veil structures in neuronal growth cones via its interaction with HAX1 and the Arp2/3 complex. This is Voltage-gated potassium channel KCNC3 from Rattus norvegicus (Rat).